Reading from the N-terminus, the 644-residue chain is Exoribonuclease 2 (644 aa).

Residues 189 to 516 (RQDLTALNFV…NHRLLKAVIK (328 aa)) enclose the RNB domain. In terms of domain architecture, S1 motif spans 561–643 (NTRFAAEIID…ETRSIIARPA (83 aa)).

This sequence belongs to the RNR ribonuclease family. RNase II subfamily.

It localises to the cytoplasm. It carries out the reaction Exonucleolytic cleavage in the 3'- to 5'-direction to yield nucleoside 5'-phosphates.. Its function is as follows. Involved in mRNA degradation. Hydrolyzes single-stranded polyribonucleotides processively in the 3' to 5' direction. This Salmonella typhi protein is Exoribonuclease 2.